We begin with the raw amino-acid sequence, 549 residues long: Polycomb group RING finger protein 3 homolog mig-32 (549 aa).

Residues M1 to Q263 are disordered. Positions V12–S29 are enriched in low complexity. 2 stretches are compositionally biased toward acidic residues: residues P38 to D49 and M87 to V100. Basic residues predominate over residues K118–K130. Pro residues predominate over residues P134–S144. The segment covering P145–S156 has biased composition (low complexity). Positions E205–L235 are enriched in basic and acidic residues. Residues E206–K260 adopt a coiled-coil conformation. Residues A236–R247 are compositionally biased toward basic residues. Basic and acidic residues predominate over residues R248–R258. The RING-type zinc finger occupies C329 to C368.

Component of a PRC1-like complex.

It is found in the nucleus. It localises to the nucleolus. In terms of biological role, component of a Polycomb group (PcG) multiprotein PRC1-like complex, a complex class required to maintain the transcriptionally repressive state of many genes, throughout development. Required for ubiquitination of histone H2A. Plays a role in the formation of the male-specific genital sensilla (simple sense organs) known as rays. Required for normal migration of the hermaphrodite specific neurons (HSN) and for extension of some neuronal processes. Represses vulval fates in hypodermal cells that do not normally contribute to vulval development. The protein is Polycomb group RING finger protein 3 homolog mig-32 of Caenorhabditis elegans.